The following is a 129-amino-acid chain: Endocuticle structural glycoprotein SgAbd-9 (129 aa).

The residue at position 1 (Gln-1) is a Pyrrolidone carboxylic acid. One can recognise a Chitin-binding type R&amp;R domain in the interval 28-98 (DGSYTFSYES…VGNVVAPAIS (71 aa)). Thr-120 carries O-linked (HexNAc...) threonine glycosylation.

In terms of biological role, component of the abdominal endocuticle. This is Endocuticle structural glycoprotein SgAbd-9 from Schistocerca gregaria (Desert locust).